A 486-amino-acid chain; its full sequence is L-carnitine:corrinoid methyltransferase (486 aa).

The protein belongs to the trimethylamine methyltransferase family. In terms of assembly, the L-carnitine:THF methyl transfer system is composed of two methyltransferases, MtcB and MtqA, and the corrinoid protein MtqC.

The enzyme catalyses Co(I)-[quaternary-amine-specific corrinoid protein] + (R)-carnitine + H(+) = (3R)-4-(dimethylamino)-3-hydroxybutanoate + methyl-Co(III)-[quaternary-amine-specific corrinoid protein]. Functionally, involved in the degradation of the quaternary amine L-carnitine. Component of a corrinoid-dependent methyltransferase system that transfers a methyl group from L-carnitine to tetrahydrofolate (THF), forming methyl-THF, a key intermediate in the Wood-Ljungdahl acetogenesis pathway. MtcB catalyzes the methylation of the corrinoid protein MtqC, using L-carnitine as the methyl donor. L-carnitine demethylation generates the unusual biological product norcarnitine, which is likely degraded by other members of the gut microbiota. In vitro, can methylate free cob(I)alamin. This chain is L-carnitine:corrinoid methyltransferase, found in Eubacterium limosum.